We begin with the raw amino-acid sequence, 602 residues long: 4-hydroxy-3-methylbut-2-en-1-yl diphosphate synthase (flavodoxin) (602 aa).

C508, C511, C543, and E550 together coordinate [4Fe-4S] cluster.

The protein belongs to the IspG family. [4Fe-4S] cluster serves as cofactor.

The enzyme catalyses (2E)-4-hydroxy-3-methylbut-2-enyl diphosphate + oxidized [flavodoxin] + H2O + 2 H(+) = 2-C-methyl-D-erythritol 2,4-cyclic diphosphate + reduced [flavodoxin]. It functions in the pathway isoprenoid biosynthesis; isopentenyl diphosphate biosynthesis via DXP pathway; isopentenyl diphosphate from 1-deoxy-D-xylulose 5-phosphate: step 5/6. Converts 2C-methyl-D-erythritol 2,4-cyclodiphosphate (ME-2,4cPP) into 1-hydroxy-2-methyl-2-(E)-butenyl 4-diphosphate. This Chlamydia trachomatis serovar D (strain ATCC VR-885 / DSM 19411 / UW-3/Cx) protein is 4-hydroxy-3-methylbut-2-en-1-yl diphosphate synthase (flavodoxin).